A 318-amino-acid polypeptide reads, in one-letter code: Acetyl-coenzyme A carboxylase carboxyl transferase subunit alpha (318 aa).

Positions 39–297 (RLEKRSQTAL…SEALKAMVGK (259 aa)) constitute a CoA carboxyltransferase C-terminal domain.

It belongs to the AccA family. In terms of assembly, acetyl-CoA carboxylase is a heterohexamer composed of biotin carboxyl carrier protein (AccB), biotin carboxylase (AccC) and two subunits each of ACCase subunit alpha (AccA) and ACCase subunit beta (AccD).

The protein resides in the cytoplasm. The catalysed reaction is N(6)-carboxybiotinyl-L-lysyl-[protein] + acetyl-CoA = N(6)-biotinyl-L-lysyl-[protein] + malonyl-CoA. It functions in the pathway lipid metabolism; malonyl-CoA biosynthesis; malonyl-CoA from acetyl-CoA: step 1/1. Functionally, component of the acetyl coenzyme A carboxylase (ACC) complex. First, biotin carboxylase catalyzes the carboxylation of biotin on its carrier protein (BCCP) and then the CO(2) group is transferred by the carboxyltransferase to acetyl-CoA to form malonyl-CoA. The polypeptide is Acetyl-coenzyme A carboxylase carboxyl transferase subunit alpha (Bartonella tribocorum (strain CIP 105476 / IBS 506)).